Reading from the N-terminus, the 70-residue chain is DNA-directed RNA polymerase subunit omega (70 aa).

Belongs to the RNA polymerase subunit omega family. As to quaternary structure, the RNAP catalytic core consists of 2 alpha, 1 beta, 1 beta' and 1 omega subunit. When a sigma factor is associated with the core the holoenzyme is formed, which can initiate transcription.

It carries out the reaction RNA(n) + a ribonucleoside 5'-triphosphate = RNA(n+1) + diphosphate. Its function is as follows. Promotes RNA polymerase assembly. Latches the N- and C-terminal regions of the beta' subunit thereby facilitating its interaction with the beta and alpha subunits. The polypeptide is DNA-directed RNA polymerase subunit omega (Nitratiruptor sp. (strain SB155-2)).